A 2172-amino-acid polypeptide reads, in one-letter code: DExH-box ATP-dependent RNA helicase DExH13 (2172 aa).

The interval 20–83 (YKVNSSLVLN…KSKKKKERCD (64 aa)) is disordered. A compositionally biased stretch (basic and acidic residues) spans 30–73 (SDERRRDTHESSGEPESLRGRIDPKSFGDRVVRGRPHELDERLN). A Helicase ATP-binding 1 domain is found at 515 to 698 (GTALFKADNI…FLRVDLKNGL (184 aa)). Position 528-535 (528-535 (APTGAGKT)) interacts with ATP. A DEIH box motif is present at residues 640–643 (DEIH). One can recognise a Helicase C-terminal 1 domain in the interval 742 to 946 (GKHQVLIFVH…NAREACHWLG (205 aa)). The region spanning 1007-1308 (TDLGRIASYY…KWLDSPTVLP (302 aa)) is the SEC63 1 domain. Residues 1361–1538 (TVLYNTSDNV…WIGASSCGVF (178 aa)) form the Helicase ATP-binding 2 domain. 1374-1381 (APTGSGKT) provides a ligand contact to ATP. The DELH box motif lies at 1480–1483 (DELH). In terms of domain architecture, Helicase C-terminal 2 spans 1575-1772 (AIVQHAKNKK…NFNAEVVARV (198 aa)). The SEC63 2 domain maps to 1840–2157 (PLNLGMIASY…YLGCDQEYSF (318 aa)).

The protein resides in the nucleus. It carries out the reaction ATP + H2O = ADP + phosphate + H(+). Functionally, RNA helicase that plays an essential role in pre-mRNA splicing as component of the U5 snRNP and U4/U6-U5 tri-snRNP complexes. Involved in spliceosome assembly, activation and disassembly. The protein is DExH-box ATP-dependent RNA helicase DExH13 of Arabidopsis thaliana (Mouse-ear cress).